A 615-amino-acid chain; its full sequence is Chromosomal replication initiator protein DnaA (615 aa).

Residues 1 to 88 form a domain I, interacts with DnaA modulators region; that stretch reads MSEGQINLAM…RVAVTVDPSA (88 aa). The disordered stretch occupies residues 85-272; the sequence is DPSAVPPSAP…PTSGGPDQLN (188 aa). The tract at residues 88 to 269 is domain II; sequence AVPPSAPTEE…STNPTSGGPD (182 aa). Low complexity-rich tracts occupy residues 94–112 and 173–190; these read PTEE…PAPD and PSSA…VAES. The tract at residues 270–486 is domain III, AAA+ region; the sequence is QLNPKYTFDT…GALIRVTAFA (217 aa). ATP-binding residues include glycine 314, glycine 316, lysine 317, and threonine 318. The tract at residues 487-615 is domain IV, binds dsDNA; that stretch reads SLNRQSVDLH…QQAHHNHHHL (129 aa).

This sequence belongs to the DnaA family. As to quaternary structure, oligomerizes as a right-handed, spiral filament on DNA at oriC.

It localises to the cytoplasm. Functionally, plays an essential role in the initiation and regulation of chromosomal replication. ATP-DnaA binds to the origin of replication (oriC) to initiate formation of the DNA replication initiation complex once per cell cycle. Binds the DnaA box (a 9 base pair repeat at the origin) and separates the double-stranded (ds)DNA. Forms a right-handed helical filament on oriC DNA; dsDNA binds to the exterior of the filament while single-stranded (ss)DNA is stabiized in the filament's interior. The ATP-DnaA-oriC complex binds and stabilizes one strand of the AT-rich DNA unwinding element (DUE), permitting loading of DNA polymerase. After initiation quickly degrades to an ADP-DnaA complex that is not apt for DNA replication. Binds acidic phospholipids. In Thermobifida fusca (strain YX), this protein is Chromosomal replication initiator protein DnaA.